The chain runs to 395 residues: Protein maternal effect lethal 26 (395 aa).

Positions lysine 41–isoleucine 162 constitute an MATH domain. Residues cysteine 201–isoleucine 269 form the BTB domain.

As to quaternary structure, interacts (via BTB domain) with cul-3. Seems to be a component of a E3 ubiquitin-protein ligase complex containing cul-3. Interacts (probably via MATH domain) with mei-1, which targets mei-1 for ubiquitin-mediated proteolysis. Interacts (probably via MATH domain) with ppfr-1, the regulatory subunit of the PP4 complex; targets ppfr-1 for ubiquitin-mediated proteolysis. May interact (via MATH domain) with unc-89 (via Ig-like C2-type domain 2/3 and, Ig-like C2-type domain 50 and fibronectin type-III domain 2). In terms of tissue distribution, expressed in body wall muscles.

The protein resides in the cytoplasm. The protein localises to the myofibril. Its subcellular location is the sarcomere. It localises to the m line. It is found in the i band. The protein operates within protein modification; protein ubiquitination. Functionally, probable substrate-specific adapter of an E3 ubiquitin-protein ligase complex which mediates the ubiquitination and subsequent proteasomal degradation of target proteins. Controls degradation of microtubule severing protein mei-1 after meiosis. Controls degradation of ppfr-1, the regulatory subunit of PP4 complex, after meiosis. In body wall muscles, involved in the organization of myosin thick filaments, likely by regulating the degradation of mei-1 downstream of unc-89. May also activate the TORC1 pathway. The protein is Protein maternal effect lethal 26 (mel-26) of Caenorhabditis elegans.